A 130-amino-acid polypeptide reads, in one-letter code: Small ribosomal subunit protein uS11 (130 aa).

It belongs to the universal ribosomal protein uS11 family. As to quaternary structure, part of the 30S ribosomal subunit. Interacts with proteins S7 and S18. Binds to IF-3.

In terms of biological role, located on the platform of the 30S subunit, it bridges several disparate RNA helices of the 16S rRNA. Forms part of the Shine-Dalgarno cleft in the 70S ribosome. The chain is Small ribosomal subunit protein uS11 from Prochlorococcus marinus (strain MIT 9312).